Here is a 483-residue protein sequence, read N- to C-terminus: Aspartyl/glutamyl-tRNA(Asn/Gln) amidotransferase subunit B (483 aa).

It belongs to the GatB/GatE family. GatB subfamily. As to quaternary structure, heterotrimer of A, B and C subunits.

The enzyme catalyses L-glutamyl-tRNA(Gln) + L-glutamine + ATP + H2O = L-glutaminyl-tRNA(Gln) + L-glutamate + ADP + phosphate + H(+). The catalysed reaction is L-aspartyl-tRNA(Asn) + L-glutamine + ATP + H2O = L-asparaginyl-tRNA(Asn) + L-glutamate + ADP + phosphate + 2 H(+). Allows the formation of correctly charged Asn-tRNA(Asn) or Gln-tRNA(Gln) through the transamidation of misacylated Asp-tRNA(Asn) or Glu-tRNA(Gln) in organisms which lack either or both of asparaginyl-tRNA or glutaminyl-tRNA synthetases. The reaction takes place in the presence of glutamine and ATP through an activated phospho-Asp-tRNA(Asn) or phospho-Glu-tRNA(Gln). This chain is Aspartyl/glutamyl-tRNA(Asn/Gln) amidotransferase subunit B, found in Rickettsia africae (strain ESF-5).